Here is an 87-residue protein sequence, read N- to C-terminus: Beta-toxin Ct17 (87 aa).

Residues 1-19 form the signal peptide; the sequence is MNSLLMITACLVLIGTVWA. Positions 20–85 constitute an LCN-type CS-alpha/beta domain; sequence KKDGYLVDKT…TWPLPNKRCG (66 aa). 4 disulfide bridges follow: C31–C84, C35–C60, C44–C65, and C48–C67. Position 84 is a cysteine amide (C84).

It belongs to the long (4 C-C) scorpion toxin superfamily. Sodium channel inhibitor family. Beta subfamily. Expressed by the venom gland.

Its subcellular location is the secreted. Its function is as follows. Beta toxins bind voltage-independently at site-4 of sodium channels (Nav) and shift the voltage of activation toward more negative potentials thereby affecting sodium channel activation and promoting spontaneous and repetitive firing. Is possibly lethal to mice, freshwater shrimp and crickets. The polypeptide is Beta-toxin Ct17 (Centruroides tecomanus (Scorpion)).